Reading from the N-terminus, the 94-residue chain is Conotoxin Im026 (94 aa).

The signal sequence occupies residues 1–24 (MRLTTMHSVILMLLLVFAFDNVDG). Residues 25–59 (DEPGQTARDVDNRNFMSILRSEGKPVHFLRAIKKR) constitute a propeptide that is removed on maturation.

Contains 4 disulfide bonds. Expressed by the venom duct.

It localises to the secreted. In terms of biological role, probable neurotoxin. The sequence is that of Conotoxin Im026 from Conus imperialis (Imperial cone).